A 289-amino-acid polypeptide reads, in one-letter code: 4-diphosphocytidyl-2-C-methyl-D-erythritol kinase (289 aa).

The active site involves Lys-10. Position 99–109 (99–109 (PMGGGLGGGSS)) interacts with ATP. Residue Asp-141 is part of the active site.

This sequence belongs to the GHMP kinase family. IspE subfamily. Homodimer.

It catalyses the reaction 4-CDP-2-C-methyl-D-erythritol + ATP = 4-CDP-2-C-methyl-D-erythritol 2-phosphate + ADP + H(+). Its pathway is isoprenoid biosynthesis; isopentenyl diphosphate biosynthesis via DXP pathway; isopentenyl diphosphate from 1-deoxy-D-xylulose 5-phosphate: step 3/6. In terms of biological role, catalyzes the phosphorylation of the position 2 hydroxy group of 4-diphosphocytidyl-2C-methyl-D-erythritol. The polypeptide is 4-diphosphocytidyl-2-C-methyl-D-erythritol kinase (Enterobacter sp. (strain 638)).